Reading from the N-terminus, the 322-residue chain is Uridylate-specific endoribonuclease EndoU (322 aa).

The chain crosses the membrane as a helical span at residues 25–45 (FVIVGLLITIGILSWHFYEYF). One can recognise an EndoU domain in the interval 53–322 (TPDDVLTLSK…LIGTVYPDSS (270 aa)). Catalysis depends on residues His200, His215, and Lys259.

The protein belongs to the ENDOU family. Monomer. Requires Mn(2+) as cofactor. In terms of tissue distribution, predominantly expressed in head.

The protein resides in the membrane. The catalysed reaction is a ribonucleotidyl-ribonucleotide-RNA = a 3'-end 2',3'-cyclophospho-ribonucleotide-RNA + a 5'-end dephospho-ribonucleoside-RNA. Its function is as follows. Endoribonuclease that cleaves single-stranded RNAs at uridylates and releases products that have 2'-3'-cyclic phosphate termini. Preferentially cleaves single stranded RNA at poly-U sites with CU, UC and AU sites cleaved less efficiently. May target mRNAs encoding proteins involved in lipid metabolism to regulate their expression. Regulates levels of TBPH protein, but not mRNA, by an as yet unknown mechanism. Important for neuronal development or function. The protein is Uridylate-specific endoribonuclease EndoU of Drosophila melanogaster (Fruit fly).